The sequence spans 154 residues: Egg-lysin (154 aa).

The signal sequence occupies residues 1-18 (MKLLVLCIFAMMATLAMS).

As to quaternary structure, monomer. Homodimer. Molecules associate into dimers and then rapidly dissociate again. Interacts (as a monomer) with the egg vitelline layer protein VERL (via VERL repeats); each VERL chain can bind multiple copies of lysin. As to expression, sperm (at protein level).

The protein localises to the cytoplasmic vesicle. It localises to the secretory vesicle. Its subcellular location is the acrosome lumen. In terms of biological role, creates a 3 um hole in the egg vitelline layer through which the sperm passes. Does not have enzyme activity. Species-specific interaction between the sperm protein lysin and the egg protein VERL exposes a basic surface on lysin that may dissociate the egg vitelline layer via electrostatic repulsion. Plays a role in ensuring species-specific fertilization. The polypeptide is Egg-lysin (Haliotis rufescens (California red abalone)).